Reading from the N-terminus, the 149-residue chain is Ribosomal RNA large subunit methyltransferase H (149 aa).

S-adenosyl-L-methionine contacts are provided by residues L71, G98, and 117-122 (LSKLTL).

Belongs to the RNA methyltransferase RlmH family. As to quaternary structure, homodimer.

The protein localises to the cytoplasm. It catalyses the reaction pseudouridine(1915) in 23S rRNA + S-adenosyl-L-methionine = N(3)-methylpseudouridine(1915) in 23S rRNA + S-adenosyl-L-homocysteine + H(+). In terms of biological role, specifically methylates the pseudouridine at position 1915 (m3Psi1915) in 23S rRNA. This Campylobacter jejuni subsp. jejuni serotype O:6 (strain 81116 / NCTC 11828) protein is Ribosomal RNA large subunit methyltransferase H.